A 75-amino-acid polypeptide reads, in one-letter code: uncharacterized protein (75 aa).

The helical transmembrane segment at 12 to 32 (LKVFILFTGFTALFYYAMIWV) threads the bilayer.

Its subcellular location is the cell membrane. This is an uncharacterized protein from Bacillus subtilis (strain 168).